A 195-amino-acid polypeptide reads, in one-letter code: 4'-phosphopantetheinyl transferase AcpT (195 aa).

This sequence belongs to the P-Pant transferase superfamily. Gsp/Sfp/HetI/AcpT family.

It carries out the reaction apo-[ACP] + CoA = holo-[ACP] + adenosine 3',5'-bisphosphate + H(+). In terms of biological role, may be involved in an alternative pathway for phosphopantetheinyl transfer and holo-ACP synthesis in E.coli. The native apo-protein substrate is unknown. Is able to functionally replace AcpS in vivo but only when expressed at high levels. The protein is 4'-phosphopantetheinyl transferase AcpT of Escherichia coli (strain K12).